We begin with the raw amino-acid sequence, 451 residues long: Pre-mRNA-splicing factor PRP46 (451 aa).

WD repeat units lie at residues 137 to 168 (GHLG…KVWD), 180 to 210 (GHVM…KCWD), 222 to 252 (GHLS…KLWD), 264 to 294 (GHKG…RLWD), 306 to 335 (HHKR…RSWG), 348 to 377 (EKTG…SFYD), and 397 to 427 (EGER…KIWK).

Belongs to the WD repeat PRL1/PRL2 family. In terms of assembly, belongs to the CWC complex (or CEF1-associated complex), a spliceosome subcomplex composed of the U2, U5 and U6 snRNAs and at least BUD13, BUD31, BRR2, CDC40, CEF1, CLF1, CUS1, CWC2, CWC15, CWC21, CWC22, CWC23, CWC24, CWC25, CWC27, ECM2, HSH155, IST3, ISY1, LEA1, MSL1, NTC20, PRP8, PRP9, PRP11, PRP19, PRP21, PRP22, PRP45, PRP46, SLU7, SMB1, SMD1, SMD2, SMD3, SMX2, SMX3, SNT309, SNU114, SPP2, SYF1, SYF2, RSE1 and YJU2. Interacts with CEF1, CLF1, NTC20, PRP45 and SYF1.

Its subcellular location is the cytoplasm. The protein localises to the nucleus. Functionally, involved in pre-mRNA splicing. May also be required for cell cycle progression at G2/M. The chain is Pre-mRNA-splicing factor PRP46 (PRP46) from Saccharomyces cerevisiae (strain ATCC 204508 / S288c) (Baker's yeast).